A 161-amino-acid polypeptide reads, in one-letter code: Cyclic pyranopterin monophosphate synthase (161 aa).

Substrate is bound by residues 75 to 77 (LCH) and 113 to 114 (ME). Asp-128 is an active-site residue.

It belongs to the MoaC family. Homohexamer; trimer of dimers.

The catalysed reaction is (8S)-3',8-cyclo-7,8-dihydroguanosine 5'-triphosphate = cyclic pyranopterin phosphate + diphosphate. It participates in cofactor biosynthesis; molybdopterin biosynthesis. In terms of biological role, catalyzes the conversion of (8S)-3',8-cyclo-7,8-dihydroguanosine 5'-triphosphate to cyclic pyranopterin monophosphate (cPMP). The sequence is that of Cyclic pyranopterin monophosphate synthase from Salmonella heidelberg (strain SL476).